The following is a 156-amino-acid chain: Transthyretin-like protein 1 (156 aa).

Positions Met-1–Ala-17 are cleaved as a signal peptide. The N-linked (GlcNAc...) asparagine glycan is linked to Asn-151.

This sequence belongs to the nematode transthyretin-like family.

Its subcellular location is the secreted. This is Transthyretin-like protein 1 (ttr-1) from Caenorhabditis elegans.